We begin with the raw amino-acid sequence, 662 residues long: Transmembrane 9 superfamily member 2 (662 aa).

Positions 1-28 (MSSRPPASPPAQGSRLLLLSLLLLGTVP) are cleaved as a signal peptide. Residues 29–299 (GPRPGSAFYL…LESMPHTHIQ (271 aa)) are Lumenal-facing. Residues 300–320 (WFSIMNSLVIVLFLSGMVAMI) traverse the membrane as a helical segment. The Cytoplasmic segment spans residues 321–373 (MLRTLHKDIARYNQMDSTEDAQEEFGWKLVHGDIFRPPRKGMLLSVFLGSGTQ). Residues 374–394 (ILIMTFVTLFFACLGFLSPAN) traverse the membrane as a helical segment. Over 395 to 397 (RGA) the chain is Lumenal. The helical transmembrane segment at 398–418 (LMTCAVVLWVLLGTPAGYVAA) threads the bilayer. The Cytoplasmic portion of the chain corresponds to 419–436 (RFYKSFGGEKWKTNVLLT). The chain crosses the membrane as a helical span at residues 437 to 457 (SFLCPGIVFADFFIMNLILWG). At 458–465 (EGSSAAIP) the chain is on the lumenal side. The chain crosses the membrane as a helical span at residues 466-486 (FGTLVAILALWFCISVPLTFI). Topologically, residues 487 to 521 (GAYFGFKKNAIEHPVRTNQIPRQIPEQSFYTKPLP) are cytoplasmic. A helical membrane pass occupies residues 522 to 542 (GIIMGGILPFGCIFIQLFFIL). Residues 543 to 553 (NSIWSHQMYYM) are Lumenal-facing. The helical transmembrane segment at 554-574 (FGFLFLVFIILVITCSEATIL) threads the bilayer. The Cytoplasmic portion of the chain corresponds to 575 to 590 (LCYFHLCAEDYHWQWR). A helical transmembrane segment spans residues 591 to 611 (SFLTSGFTAVYFLIYAIHYFF). Residues 612–630 (SKLQITGTASTILYFGYTM) lie on the Lumenal side of the membrane. Residues 631-651 (IMVLIFFLFTGTIGFFACFWF) traverse the membrane as a helical segment. Topologically, residues 652–662 (VTKIYSVVKVD) are cytoplasmic.

The protein belongs to the nonaspanin (TM9SF) (TC 9.A.2) family.

The protein resides in the endosome membrane. It is found in the golgi outpost. Its subcellular location is the cytoplasm. The protein localises to the cytoskeleton. It localises to the microtubule organizing center. Its function is as follows. In the intracellular compartments, may function as a channel or small molecule transporter. The protein is Transmembrane 9 superfamily member 2 (Tm9sf2) of Mus musculus (Mouse).